We begin with the raw amino-acid sequence, 122 residues long: Protein MGF 100-1R (122 aa).

This sequence belongs to the asfivirus MGF 100 family.

Functionally, plays a role in virus cell tropism, and may be required for efficient virus replication in macrophages. The protein is Protein MGF 100-1R of Ornithodoros (relapsing fever ticks).